The chain runs to 372 residues: Flap endonuclease 1 (372 aa).

Residues 1 to 105 are N-domain; it reads MGVKGLNQLI…GELEKRLLRR (105 aa). Position 34 (Asp-34) interacts with Mg(2+). DNA contacts are provided by Arg-47 and Arg-71. Positions 87, 159, 161, 180, and 182 each coordinate Mg(2+). Residues 123–254 form an I-domain region; sequence EVLKFEKRLV…ATAFKLIKEH (132 aa). Glu-159 is a DNA binding site. Gly-232 and Asp-234 together coordinate DNA. Residue Asp-234 participates in Mg(2+) binding. Residues 339–347 are interaction with PCNA; the sequence is VQGRLDGFF. Over residues 353-366 the composition is skewed to basic and acidic residues; sequence DDKKRKADPKESKA. A disordered region spans residues 353–372; sequence DDKKRKADPKESKASKKKKK.

This sequence belongs to the XPG/RAD2 endonuclease family. FEN1 subfamily. In terms of assembly, interacts with PCNA. Three molecules of RAD27 bind to one PCNA trimer with each molecule binding to one PCNA monomer. PCNA stimulates the nuclease activity without altering cleavage specificity. It depends on Mg(2+) as a cofactor. Post-translationally, phosphorylated. Phosphorylation upon DNA damage induces relocalization to the nuclear plasma.

The protein resides in the nucleus. Its subcellular location is the nucleolus. The protein localises to the nucleoplasm. It is found in the mitochondrion. Its function is as follows. Structure-specific nuclease with 5'-flap endonuclease and 5'-3' exonuclease activities involved in DNA replication and repair. During DNA replication, cleaves the 5'-overhanging flap structure that is generated by displacement synthesis when DNA polymerase encounters the 5'-end of a downstream Okazaki fragment. It enters the flap from the 5'-end and then tracks to cleave the flap base, leaving a nick for ligation. Also involved in the long patch base excision repair (LP-BER) pathway, by cleaving within the apurinic/apyrimidinic (AP) site-terminated flap. Acts as a genome stabilization factor that prevents flaps from equilibrating into structures that lead to duplications and deletions. Also possesses 5'-3' exonuclease activity on nicked or gapped double-stranded DNA, and exhibits RNase H activity. Also involved in replication and repair of rDNA and in repairing mitochondrial DNA. This chain is Flap endonuclease 1, found in Candida albicans (strain WO-1) (Yeast).